The primary structure comprises 311 residues: MNKGGAQQKGHSSKQAENIVLVGRTGNGKSATGNSLIGKKVFASKAHASGVTMKCQTHGVVTKDGHKINVIDTPGLFDLSVSAEYISKEIVRCLTLAEGGIHAVLLVLSARTRITQEEENTLRTLQALFGSQILDYVVVVFTGGDVLEECKETLEDYLGRDCPTFIKEVMRMSSNRKVVIDNKTHDEGKKAEQVHKLLSLVDDIRRSKCGEAYTDDTYHMIKEESEKLRKHHEELESKNYSEECAAEMKNQSLILYKENLKQMSEQLEKKLKDAAEAQEKALSKMTQENNELNLALKIHIPLPPITPCNIL.

The region spanning 14 to 222 (KQAENIVLVG…YTDDTYHMIK (209 aa)) is the AIG1-type G domain. The interval 23 to 30 (GRTGNGKS) is G1. GTP contacts are provided by residues 23–31 (GRTGNGKSA) and serine 44. Positions 50-54 (GVTMK) are G2. The segment at 72-75 (DTPG) is G3. The tract at residues 142-145 (TGGD) is G4. The G5 stretch occupies residues 181-183 (DNK). Asparagine 182 is a binding site for GTP. The stretch at 218 to 295 (YHMIKEESEK…TQENNELNLA (78 aa)) forms a coiled coil.

The protein belongs to the TRAFAC class TrmE-Era-EngA-EngB-Septin-like GTPase superfamily. AIG1/Toc34/Toc159-like paraseptin GTPase family. IAN subfamily. In terms of tissue distribution, ubiquitous.

The polypeptide is Immune-associated nucleotide-binding protein 7 (Arabidopsis thaliana (Mouse-ear cress)).